Reading from the N-terminus, the 162-residue chain is MASRGVNKVILIGHLGQDPEVRYMPNGNAVVNMTLATSENWKDKNTGENKEKTEWHRIVLFGKLAEIAGEYLRKGSQVYIEGSLQTRKWQDQNGLERYTTEVIVNIGGTMQMLGNRNSNSHNVTLNENNNIVKTKKIEINNSPKKIEKIDSSEIDFDDEIPF.

The region spanning Val6–Gln111 is the SSB domain. A DNA-binding region spans residues Trp55–Phe61. Residues Asp157–Phe162 carry the Important for interaction with partner proteins motif.

As to quaternary structure, homotetramer.

Functionally, plays an important role in DNA replication, recombination and repair. Binds to ssDNA and to an array of partner proteins to recruit them to their sites of action during DNA metabolism. The polypeptide is Single-stranded DNA-binding protein (ssb) (Buchnera aphidicola subsp. Schizaphis graminum (strain Sg)).